A 119-amino-acid chain; its full sequence is Methylglyoxal synthase (119 aa).

An MGS-like domain is found at 1 to 119 (MKIALIAHDK…ESAKLIMADI (119 aa)). Substrate contacts are provided by residues H8, K12, 34–37 (TGTT), and 54–55 (SG). Catalysis depends on D60, which acts as the Proton donor/acceptor. H87 provides a ligand contact to substrate.

Belongs to the methylglyoxal synthase family.

The catalysed reaction is dihydroxyacetone phosphate = methylglyoxal + phosphate. Its function is as follows. Catalyzes the formation of methylglyoxal from dihydroxyacetone phosphate. This Clostridium perfringens (strain ATCC 13124 / DSM 756 / JCM 1290 / NCIMB 6125 / NCTC 8237 / Type A) protein is Methylglyoxal synthase.